Reading from the N-terminus, the 504-residue chain is L-amino-acid oxidase (504 aa).

A signal peptide spans 1–18; it reads MNVFFMFSLLFLAALGSC. C28 and C191 are disulfide-bonded. FAD is bound by residues 61–62, 81–82, R89, and 105–108; these read MS, EA, and GPMR. R108 contacts substrate. N190 is a glycosylation site (N-linked (GlcNAc...) asparagine). A substrate-binding site is contributed by H241. FAD is bound at residue V279. C349 and C430 are disulfide-bonded. N-linked (GlcNAc...) asparagine glycosylation occurs at N379. Y390 lines the substrate pocket. Residues E475 and 482 to 487 contribute to the FAD site; that span reads GWIDST. 482-483 contacts substrate; it reads GW.

It belongs to the flavin monoamine oxidase family. FIG1 subfamily. As to quaternary structure, homodimer; non-covalently linked. The cofactor is FAD. In terms of tissue distribution, expressed by the venom gland.

It is found in the secreted. The enzyme catalyses an L-alpha-amino acid + O2 + H2O = a 2-oxocarboxylate + H2O2 + NH4(+). The catalysed reaction is L-leucine + O2 + H2O = 4-methyl-2-oxopentanoate + H2O2 + NH4(+). Functionally, catalyzes an oxidative deamination of predominantly hydrophobic and aromatic L-amino acids, thus producing hydrogen peroxide that may contribute to the diverse toxic effects of this enzyme. Shows activity on L-Leu. Exhibits diverse biological activities, such as hemorrhage, hemolysis, edema, antibacterial and antiparasitic activities, as well as regulation of platelet aggregation. Its effect on platelets is controversial, since it either induces aggregation or inhibits agonist-induced aggregation. These different effects are probably due to different experimental conditions. This protein induces apoptosis of cultured HeLa cells. The polypeptide is L-amino-acid oxidase (Gloydius halys (Chinese water mocassin)).